Reading from the N-terminus, the 887-residue chain is MIKHNLVSDLRRLFIDFFVKNGHQFFPSSPLIIKDDPSLLFTNAGMVQFKQIFTSVDGRSINTAVSSQKCLRVGGKHNDLENVGHTNRHHTFFEMLGNFSFGSYFKEHAIELAWNFVIKELALDRKRLYITVYHDDQDAFNLWKKISSFSDDKIIKIKTNDNFWSMGNVGPCGPCSEIFYDYGESVKGGLPGTPEEDGARFTEIWNLVFMEYNRTKEGELSVLPRKCIDTGMGLERIAAVMQGVHDNYDINLFKALIAMSKKESGNSSCEIAHRVIADHVRSAAFLIAEGLTPGNEGRDYILRRIIRRAARYVYMLKYTDSLMYKIFPVLIDETSNAYMADYYPELLKAKDMIISILKTEEENFKDTLVRALPLLEKELTYLSAGDVLSGDVIFRLYDTYGFPVDITLDIIKERGIRFDEKGFYDNMEQQKTRSRLSHLIKSTEQLNGKIWEDIRQNYNNTRFVGYDNFQVQSKILSMVMNNDRNVTVANVGDKVSILMDVTPFYAEAGGQQADTGLLSVVRRDGKDLFGSSNIADVTNTKNIFDGLYIHECIIKSGSLIIGDIVSAEINSHRRKDLCANHSATHLLHYILRMEIDNNIMQKGSLVGNDKLRFDFSYNMALTEKQIKLIENRMCDLIRQNHPVETNICNLQDAMDNGAIALFTEKYDNHEVRVVNIGNSKELCCGTHVKYTGEIGCFKIISESSIACGIRRIEAVTGQYAIDYFRQQEKVLYQVAESVKSPVEDVLVQIDKINRENQELKQKLWAAYFDIIDMQGVNIEKIGNINFLHGTLSGVPIDVVRKFIMKRLVKDMIMLFSNVVNHNRIYVVGVGNSLHSKVKAADFVKIINCVVKSKGGGNAQLAQISTEYIAEVNVIQHIKDELVSIFNA.

Residues histidine 581, histidine 585, cysteine 683, and histidine 687 each coordinate Zn(2+).

Belongs to the class-II aminoacyl-tRNA synthetase family. The cofactor is Zn(2+).

Its subcellular location is the cytoplasm. It carries out the reaction tRNA(Ala) + L-alanine + ATP = L-alanyl-tRNA(Ala) + AMP + diphosphate. Catalyzes the attachment of alanine to tRNA(Ala) in a two-step reaction: alanine is first activated by ATP to form Ala-AMP and then transferred to the acceptor end of tRNA(Ala). Also edits incorrectly charged Ser-tRNA(Ala) and Gly-tRNA(Ala) via its editing domain. This chain is Alanine--tRNA ligase, found in Ehrlichia ruminantium (strain Gardel).